A 460-amino-acid chain; its full sequence is DEAD-box helicase Dbp80 (460 aa).

Position 26 is a phosphoserine (Ser-26). Thr-30 carries the phosphothreonine modification. A Q motif motif is present at residues 73–101 (KTFEALHLKASLLKGIYAMGFNTPSKIQE). One can recognise a Helicase ATP-binding domain in the interval 106 to 276 (TLLADPPQNM…RLIVADPTII (171 aa)). Position 119 to 126 (119 to 126 (SQSGTGKT)) interacts with ATP. The DEAD box motif lies at 223–226 (DEAD). Residues 287–455 (NIKQYYVKCK…VLNTDSADDI (169 aa)) form the Helicase C-terminal domain.

It belongs to the DEAD box helicase family. DDX19/DBP5 subfamily.

It is found in the cytoplasm. The protein localises to the nucleus. Its subcellular location is the nucleoplasm. It catalyses the reaction ATP + H2O = ADP + phosphate + H(+). In terms of biological role, ATP-dependent RNA helicase involved in mRNA export from the nucleus. The polypeptide is DEAD-box helicase Dbp80 (Dbp80) (Drosophila melanogaster (Fruit fly)).